The sequence spans 441 residues: UBX domain-containing protein 6 (441 aa).

Residues 1 to 10 (MKKFFQEFKA) are mediates interaction with LMAN1. An N-acetylalanine modification is found at K2. 2 disordered regions span residues 13 to 79 (KFKS…QDTI) and 87 to 106 (LQAE…NVVS). Residues 22–36 (KLKESVGEKAHKEKP) are compositionally biased toward basic and acidic residues. Residues 51–63 (EAQMAAAAALARL) are VCP/p97-interacting motif (VIM). Positions 52–61 (AQMAAAAALA) are enriched in low complexity. A Phosphoserine modification is found at S96. Positions 175-244 (VDTIAKYLDN…DPEEFYVLSE (70 aa)) constitute a PUB domain. A UBX domain is found at 332–408 (RKYNYTLLRV…GLVPSALLTF (77 aa)).

In terms of assembly, interacts with VCP through the PUB domain (via C-terminus) and VIM motif (via N-terminus); the interaction is direct. Forms a ternary complex with CAV1 and VCP. Interacts with SYVN1. Interacts with HERPUD1. Interacts with VCPKMT. May interact with DERL1. Interacts with PLAA, VCP and YOD1; may form a complex involved in macroautophagy. Interacts with LMAN1. As to expression, enhanced expression in testis.

The protein localises to the cytoplasm. It is found in the cytosol. The protein resides in the membrane. Its subcellular location is the nucleus. It localises to the cytoskeleton. The protein localises to the microtubule organizing center. It is found in the centrosome. The protein resides in the early endosome membrane. Its subcellular location is the late endosome membrane. It localises to the lysosome membrane. Its function is as follows. May negatively regulate the ATPase activity of VCP, an ATP-driven segregase that associates with different cofactors to control a wide variety of cellular processes. As a cofactor of VCP, it may play a role in the transport of CAV1 to lysosomes for degradation. It may also play a role in endoplasmic reticulum-associated degradation (ERAD) of misfolded proteins. Together with VCP and other cofactors, it may play a role in macroautophagy, regulating for instance the clearance of damaged lysosomes. The polypeptide is UBX domain-containing protein 6 (Homo sapiens (Human)).